The following is a 391-amino-acid chain: Phosphoglycerate kinase (391 aa).

Substrate contacts are provided by residues 21-23, R36, 59-62, R113, and R146; these read DLN and HLGR. Residues K197, E319, and 345 to 348 each bind ATP; that span reads GGDT.

Belongs to the phosphoglycerate kinase family. As to quaternary structure, monomer.

It is found in the cytoplasm. The enzyme catalyses (2R)-3-phosphoglycerate + ATP = (2R)-3-phospho-glyceroyl phosphate + ADP. Its pathway is carbohydrate degradation; glycolysis; pyruvate from D-glyceraldehyde 3-phosphate: step 2/5. This is Phosphoglycerate kinase from Colwellia psychrerythraea (strain 34H / ATCC BAA-681) (Vibrio psychroerythus).